The sequence spans 420 residues: Protein ECERIFERUM 26-like (420 aa).

The protein belongs to the plant acyltransferase family. Highly expressed in flowers. Expressed in leaves.

In terms of biological role, involved in biosynthesis of the epicuticular wax. Plays a role in very-long-chain fatty acid (VLCFA) biosynthesis and is required for VLCFA elongation in leaf. Despite its classification as a BAHD acyltransferase based on sequence homology, CER26L does not seem to share the catalytic mechanism of the members of the BAHD family. The polypeptide is Protein ECERIFERUM 26-like (CER26L) (Arabidopsis thaliana (Mouse-ear cress)).